The sequence spans 204 residues: Large ribosomal subunit protein uL22m (204 aa).

Residues 1–38 (MAAVILERLGALWVQNLRGKLALGILPQSHIHTSASLE) constitute a mitochondrion transit peptide.

It belongs to the universal ribosomal protein uL22 family. Component of the mitochondrial ribosome large subunit (39S) which comprises a 16S rRNA and about 50 distinct proteins.

The protein resides in the mitochondrion. In Bos taurus (Bovine), this protein is Large ribosomal subunit protein uL22m (MRPL22).